A 621-amino-acid polypeptide reads, in one-letter code: CEP295 N-terminal-like protein (621 aa).

Positions 142-253 (GGRARENEPD…RSKGADLERS (112 aa)) are disordered. The segment covering 159–170 (RSARPPRAKEKH) has biased composition (basic residues). Over residues 171–185 (RAALSEERSCREELG) the composition is skewed to basic and acidic residues. The span at 203–213 (KPQTTKATGRM) shows a compositional bias: polar residues. Residues 219–229 (PPEKRKGRPEP) are compositionally biased toward basic and acidic residues. Residues 328–359 (QCTLREKNKWQKELELAFEELFNINRKLKKHL) adopt a coiled-coil conformation. Disordered regions lie at residues 385–421 (CGAG…ASKT), 491–529 (DQAD…PDMS), and 543–586 (REQR…DRHS). Residues 498 to 525 (STASRQRQKAEMEQRRQKQLESLEQMEH) adopt a coiled-coil conformation. Basic and acidic residues predominate over residues 505–529 (QKAEMEQRRQKQLESLEQMEHPDMS). Polar residues predominate over residues 568 to 578 (ELSTTSPSGTS).

Its subcellular location is the cell projection. The protein localises to the cilium. This chain is CEP295 N-terminal-like protein, found in Homo sapiens (Human).